Here is an 81-residue protein sequence, read N- to C-terminus: Alpha-toxin Ac1 (81 aa).

The first 17 residues, 1–17 (YIVMISLALVVMIGVES), serve as a signal peptide directing secretion. The LCN-type CS-alpha/beta domain maps to 19–80 (RDGYIVYPNN…PIKDPSQKCT (62 aa)). 4 disulfide bridges follow: C29-C79, C33-C51, C37-C61, and C41-C63.

The protein belongs to the long (4 C-C) scorpion toxin superfamily. Sodium channel inhibitor family. Alpha subfamily. In terms of tissue distribution, expressed by the venom gland.

The protein localises to the secreted. Its function is as follows. Alpha toxins bind voltage-independently at site-3 of sodium channels (Nav) and inhibit the inactivation of the activated channels, thereby blocking neuronal transmission. The protein is Alpha-toxin Ac1 of Androctonus crassicauda (Arabian fat-tailed scorpion).